The sequence spans 489 residues: MKYKNLREFLDLLEQKGELKRITQEIDPYLEMTEIADRTLSKGGPALLFENPKGYKIPVLCNLFGTPERVAMGMGQEDTKALRELGKLLAFLKEPEPPKGFKDLIGQLPQWKQVLNMPSKVLNKADCQQVVISDDDVDLYQLPIMHCWQGDVAPLVTWGLTITQGPYKKRLNLGIYRQQLIGKNKLIMRWLSHRGGALDFQEWKEANSDKPFPVSVALGADPATILAAVTPIPDTLSEYAFAGLLRGHKTEVVKSISNDLEVPASAEIVLEGYIDLNETALEGPYGDHTGYYNEQEYFPVFTVTHITMRKDAIYHSTYTGRPPDEPAVLGEALNEVFIPILQKQFPEIVDFYLPPEGCSYRLAVVTIKKQYAGHAKRVMMGVWSFLRQFMYTKFVIVCDDDVNARDWKDVIWAITTRCDPARDATLIENTPIDYLDFASPIAGLGSKMGIDATNKWAGETQREWGTPITKNPDVVKRVDEIWESLGIED.

A Mn(2+)-binding site is contributed by Asn172. Residues 175-177 (IYR), 189-191 (RWL), and 194-195 (RG) contribute to the prenylated FMN site. Glu238 serves as a coordination point for Mn(2+). Catalysis depends on Asp287, which acts as the Proton donor.

It belongs to the UbiD family. In terms of assembly, homohexamer. The cofactor is prenylated FMN. Mn(2+) is required as a cofactor.

It localises to the cell membrane. The enzyme catalyses a 4-hydroxy-3-(all-trans-polyprenyl)benzoate + H(+) = a 2-(all-trans-polyprenyl)phenol + CO2. It participates in cofactor biosynthesis; ubiquinone biosynthesis. Functionally, catalyzes the decarboxylation of 3-octaprenyl-4-hydroxy benzoate to 2-octaprenylphenol, an intermediate step in ubiquinone biosynthesis. In Glaesserella parasuis serovar 5 (strain SH0165) (Haemophilus parasuis), this protein is 3-octaprenyl-4-hydroxybenzoate carboxy-lyase.